A 322-amino-acid polypeptide reads, in one-letter code: Cytochrome c biogenesis protein CcsA (322 aa).

The next 8 helical transmembrane spans lie at 19-39 (NAIF…LIIV), 43-63 (LICN…FFYL), 72-92 (FFPL…LLFI), 104-124 (VIGA…SLSL), 150-170 (MMLS…YLVL), 230-250 (TIGI…VWAN), 264-281 (TWAL…HARL), and 291-311 (AFLG…VNFL).

Belongs to the CcmF/CycK/Ccl1/NrfE/CcsA family. In terms of assembly, may interact with Ccs1.

Its subcellular location is the plastid. The protein resides in the chloroplast thylakoid membrane. In terms of biological role, required during biogenesis of c-type cytochromes (cytochrome c6 and cytochrome f) at the step of heme attachment. This Heterosigma akashiwo (strain NIES-293 / 8280G21-1) protein is Cytochrome c biogenesis protein CcsA.